The chain runs to 203 residues: Akirin-2 (203 aa).

Phosphoserine is present on residues Ser-18 and Ser-21. The Nuclear localization signal signature appears at 22 to 27; that stretch reads PKRRRC. Ser-57 is subject to Phosphoserine. The SYVS motif motif lies at 200-203; it reads SYVS.

It belongs to the akirin family. Homodimer. Interacts with IPO9; the interaction is direct. Associates (via SYVS motif) with 20S and 26S proteasomes. Interacts with SMARCD1; promoting SWI/SNF complex recruitment. Interacts with NFKBIZ. Interacts with YWHAB. Post-translationally, polyubiquitinated. Polyubiquitination is dependent of UBR5 that extends pre-ubiquitinated AKIRIN2. In terms of tissue distribution, widely expressed with the highest expression in peripheral blood leukocytes.

The protein resides in the nucleus. It localises to the cytoplasm. The protein localises to the membrane. In terms of biological role, molecular adapter that acts as a bridge between a variety of multiprotein complexes, and which is involved in embryonic development, immunity, myogenesis and brain development. Plays a key role in nuclear protein degradation by promoting import of proteasomes into the nucleus: directly binds to fully assembled 20S proteasomes at one end and to nuclear import receptor IPO9 at the other end, bridging them together and mediating the import of pre-assembled proteasome complexes through the nuclear pore. Involved in innate immunity by regulating the production of interleukin-6 (IL6) downstream of Toll-like receptor (TLR): acts by bridging the NF-kappa-B inhibitor NFKBIZ and the SWI/SNF complex, leading to promote induction of IL6. Also involved in adaptive immunity by promoting B-cell activation. Involved in brain development: required for the survival and proliferation of cerebral cortical progenitor cells. Involved in myogenesis: required for skeletal muscle formation and skeletal development, possibly by regulating expression of muscle differentiation factors. Also plays a role in facilitating interdigital tissue regression during limb development. In Homo sapiens (Human), this protein is Akirin-2.